A 413-amino-acid polypeptide reads, in one-letter code: Gamma-glutamyl phosphate reductase (413 aa).

The protein belongs to the gamma-glutamyl phosphate reductase family.

The protein resides in the cytoplasm. The enzyme catalyses L-glutamate 5-semialdehyde + phosphate + NADP(+) = L-glutamyl 5-phosphate + NADPH + H(+). It participates in amino-acid biosynthesis; L-proline biosynthesis; L-glutamate 5-semialdehyde from L-glutamate: step 2/2. Catalyzes the NADPH-dependent reduction of L-glutamate 5-phosphate into L-glutamate 5-semialdehyde and phosphate. The product spontaneously undergoes cyclization to form 1-pyrroline-5-carboxylate. The polypeptide is Gamma-glutamyl phosphate reductase (Alkaliphilus oremlandii (strain OhILAs) (Clostridium oremlandii (strain OhILAs))).